The following is a 484-amino-acid chain: Rho guanine nucleotide exchange factor 35 (484 aa).

The tract at residues 139-418 (FSSDLGSEEE…ALIAPEDSPH (280 aa)) is disordered. The residue at position 184 (serine 184) is a Phosphoserine. Positions 217–237 (ESQGLLHPQEVQVLEEQGQQE) are enriched in low complexity. The span at 266 to 278 (NDEKGEQKQKQEQ) shows a compositional bias: basic and acidic residues. Residues 299-309 (GLNDGEWEQED) show a composition bias toward acidic residues. Basic and acidic residues-rich tracts occupy residues 323–368 (GEER…KEKG) and 394–404 (RSREEENEHHG).

The chain is Rho guanine nucleotide exchange factor 35 (ARHGEF35) from Homo sapiens (Human).